An 81-amino-acid chain; its full sequence is Putative snRNP Sm-like protein (81 aa).

A Sm domain is found at 13–81 (RPLDALGNSL…RGDNIVYISP (69 aa)).

The protein belongs to the snRNP Sm proteins family.

This chain is Putative snRNP Sm-like protein, found in Methanothermobacter thermautotrophicus (strain ATCC 29096 / DSM 1053 / JCM 10044 / NBRC 100330 / Delta H) (Methanobacterium thermoautotrophicum).